Reading from the N-terminus, the 301-residue chain is Transcription elongation factor A protein 1 (301 aa).

The residue at position 1 (methionine 1) is an N-acetylmethionine. The TFIIS N-terminal domain occupies 3 to 80 (DEVVRIAKKM…KSWKKLLDGP (78 aa)). Lysine 55 is covalently cross-linked (Glycyl lysine isopeptide (Lys-Gly) (interchain with G-Cter in ubiquitin)). Residues serine 57, serine 81, serine 97, and serine 100 each carry the phosphoserine modification. A compositionally biased stretch (basic and acidic residues) spans 76 to 93 (LLDGPSTDKDPEEKKKEP). Residues 76–139 (LLDGPSTDKD…FPRAPSTSDS (64 aa)) are disordered. The TFIIS central domain occupies 140 to 256 (VRLKCREMLA…EHQMAKTGGT (117 aa)). A TFIIS-type zinc finger spans residues 259-299 (DLFTCGKCKKKNCTYTQVQTRSADEPMTTFVVCNECGNRWK). The Zn(2+) site is built by cysteine 263, cysteine 266, cysteine 291, and cysteine 294.

It belongs to the TFS-II family. As to quaternary structure, interacts with EAF2. Associates with UBR5 and forms a transcription regulatory complex made of CDK9, Pol II, UBR5 and TCEA1/TFIIS. Part of TBP-based Pol II pre-initiation complex (PIC), in which Pol II core assembles with general transcription factors and other specific initiation factors including GTF2E1, GTF2E2, GTF2F1, GTF2F2, TCEA1, ERCC2, ERCC3, GTF2H2, GTF2H3, GTF2H4, GTF2H5, GTF2A1, GTF2A2, GTF2B and TBP; this large multi-subunit PIC complex mediates DNA unwinding and targets Pol II core to the transcription start site where the first phosphodiester bond forms.

The protein localises to the nucleus. Functionally, necessary for efficient RNA polymerase II transcription elongation past template-encoded arresting sites. The arresting sites in DNA have the property of trapping a certain fraction of elongating RNA polymerases that pass through, resulting in locked ternary complexes. Cleavage of the nascent transcript by S-II allows the resumption of elongation from the new 3'-terminus. The polypeptide is Transcription elongation factor A protein 1 (Tcea1) (Mus musculus (Mouse)).